The primary structure comprises 426 residues: Protein PHOSPHATE STARVATION RESPONSE 2 (426 aa).

Disordered stretches follow at residues 27–81, 96–123, and 198–247; these read ATLD…PLRS, YTNA…QYGG, and TQPQ…NSKT. Residues 69–81 show a composition bias toward polar residues; that stretch reads FQSSTGSVGPLRS. Composition is skewed to low complexity over residues 102 to 119 and 205 to 225; these read YNSQ…NYGS and AAQS…SSQS. The segment covering 237-246 has biased composition (polar residues); the sequence is SGASNTSNSK. An HTH myb-type domain is found at 243–303; that stretch reads SNSKTRMRWT…HLQKYRTARY (61 aa). Positions 274 to 299 form a DNA-binding region, H-T-H motif; it reads PKGVLKLMKADNLTIYHVKSHLQKYR. Disordered stretches follow at residues 302-326 and 382-426; these read RYRP…PSID and DKAV…SGDR. A compositionally biased stretch (basic and acidic residues) spans 303-322; that stretch reads YRPELSEGSSEKKAASKEDI. 2 stretches are compositionally biased toward polar residues: residues 387-401 and 411-426; these read ASTS…SDLP and ENSQ…SGDR.

Interacts (via C-terminus) with SPX4 (via N-terminus) in the presence of inositol polyphosphate. Interacts (via C-terminus) with SPX1 and SPX2 (via SPX domain). Interacts with RLI1 in the nucleus.

The protein resides in the nucleus. It is found in the cytoplasm. Functionally, transcription factor involved in phosphate starvation signaling. Binds to P1BS, an imperfect palindromic sequence 5'-GNATATNC-3', to promote the expression of inorganic phosphate (Pi) starvation-responsive genes. Functionally redundant with PHR1 and PHR3 in regulating Pi starvation response and Pi homeostasis. Involved in both systematic and local Pi-signaling pathways. Regulates several Pi transporters. PHR2 binding to DNA is repressed redundantly by SPX1, SPX2 and SPX4 in a PI-dependent manner. The DNA-binding activity is also repressed by SPX4. Involved in root growth under Pi deprivation. Involved in the modulation of Pi response and homeostasis together with RLI1; promotes RLI1 expression in response to nitrate availability, thus triggering the nitrate-induced phosphate response (NIPR). This Oryza sativa subsp. indica (Rice) protein is Protein PHOSPHATE STARVATION RESPONSE 2.